Consider the following 350-residue polypeptide: Histidinol-phosphate aminotransferase 1 (350 aa).

Residue Lys209 is modified to N6-(pyridoxal phosphate)lysine.

This sequence belongs to the class-II pyridoxal-phosphate-dependent aminotransferase family. Histidinol-phosphate aminotransferase subfamily. As to quaternary structure, homodimer. The cofactor is pyridoxal 5'-phosphate.

It carries out the reaction L-histidinol phosphate + 2-oxoglutarate = 3-(imidazol-4-yl)-2-oxopropyl phosphate + L-glutamate. It functions in the pathway amino-acid biosynthesis; L-histidine biosynthesis; L-histidine from 5-phospho-alpha-D-ribose 1-diphosphate: step 7/9. The protein is Histidinol-phosphate aminotransferase 1 (hisC1) of Bradyrhizobium diazoefficiens (strain JCM 10833 / BCRC 13528 / IAM 13628 / NBRC 14792 / USDA 110).